We begin with the raw amino-acid sequence, 314 residues long: Acetaldehyde dehydrogenase 1 (314 aa).

Ser11–Ile14 contributes to the NAD(+) binding site. Cys129 functions as the Acyl-thioester intermediate in the catalytic mechanism. NAD(+)-binding positions include Ser160–Asn168 and Asn292.

It belongs to the acetaldehyde dehydrogenase family.

It carries out the reaction acetaldehyde + NAD(+) + CoA = acetyl-CoA + NADH + H(+). In Nocardioides sp. (strain ATCC BAA-499 / JS614), this protein is Acetaldehyde dehydrogenase 1.